The chain runs to 241 residues: B-cell receptor-associated protein 29 (241 aa).

The Lumenal segment spans residues Met1–Ala6. Residues Ala7–Ile27 form a helical membrane-spanning segment. At Pro28–Lys43 the chain is on the cytoplasmic side. The helical transmembrane segment at Ile44 to Leu64 threads the bilayer. Topologically, residues Asp65 to Asn103 are lumenal. Residues Leu104–Ile124 traverse the membrane as a helical segment. Residues Thr125–Leu241 are Cytoplasmic-facing. The stretch at Gly166–Leu233 forms a coiled coil. A disordered region spans residues Leu198 to Leu223. The span at Met206 to Leu223 shows a compositional bias: basic and acidic residues. Positions Lys238 to Leu241 match the Di-lysine motif motif.

It belongs to the BCAP29/BCAP31 family. As to quaternary structure, homodimer. Heterodimer with BCAP31. Binds CASP8 (isoform 9) as a complex containing BCAP31, BCAP29, BCL2 and/or BCL2L1. Interacts with VAMP3, VAMP1 and membrane IgD immunoglobulins. May interact with ACTG1 and non-muscle myosin II.

The protein resides in the endoplasmic reticulum membrane. Its function is as follows. May play a role in anterograde transport of membrane proteins from the endoplasmic reticulum to the Golgi. May be involved in CASP8-mediated apoptosis. In Homo sapiens (Human), this protein is B-cell receptor-associated protein 29 (BCAP29).